A 648-amino-acid chain; its full sequence is RAF proto-oncogene serine/threonine-protein kinase (648 aa).

Phosphoserine; by MAPK1 is present on S29. Phosphoserine; by PKA and MAPK1 is present on S43. The RBD domain occupies 56–131 (NTIRVFLPNK…IGEELQVDFL (76 aa)). A Phorbol-ester/DAG-type zinc finger spans residues 138 to 184 (THNFARKTFLKLAFCDICQKFLLNGFRCQTCGYKFHEHCSTKVPTMC). H139, C152, C155, C165, C168, H173, C176, and C184 together coordinate Zn(2+). Positions 205–265 (GVPAPPSFPM…RSTSTPNVHM (61 aa)) are disordered. S233 is subject to Phosphoserine; by PKA. Over residues 239-265 (TFNTSSPSSEGSLSQRQRSTSTPNVHM) the composition is skewed to polar residues. Phosphoserine is present on S252. Residue S259 is modified to Phosphoserine; by PKA, PKC and PKB/AKT1. Position 268 is a phosphothreonine; by autocatalysis (T268). At T269 the chain carries Phosphothreonine; by PKA. The disordered stretch occupies residues 281–335 (IRSHSESASPSALSSSPNNLSPTGWSQPKTPVPAQRERAPGSGTQEKNKIRPRGQ). Positions 286 to 301 (ESASPSALSSSPNNLS) are enriched in low complexity. Phosphoserine; by MAPK1 occurs at positions 289, 296, and 301. The segment at 331–349 (RPRGQRDSSYYWEIEASEV) is interaction with PEBP1/RKIP. A Phosphoserine; by PAK1, PAK2, PAK3 and PAK5 modification is found at S338. At S339 the chain carries Phosphoserine; by PAK1, PAK2 and PAK3. Phosphotyrosine; by SRC occurs at positions 340 and 341. The region spanning 349–609 (VMLSTRIGSG…PQILSSIELL (261 aa)) is the Protein kinase domain. Residues 355-363 (IGSGSFGTV) and K375 contribute to the ATP site. D468 serves as the catalytic Proton acceptor. At S471 the chain carries Phosphoserine. T491 is subject to Phosphothreonine. S494 bears the Phosphoserine mark. Residues S497 and S499 each carry the phosphoserine; by PKC modification. Symmetric dimethylarginine; by PRMT5 is present on R563. S621 bears the Phosphoserine mark. S642 carries the phosphoserine; by MAPK1 modification.

Belongs to the protein kinase superfamily. TKL Ser/Thr protein kinase family. RAF subfamily. Monomer. Homodimer. Heterodimerizes with BRAF and this heterodimer possesses a highly increased kinase activity compared to the respective homodimers or monomers. Heterodimerization is mitogen-regulated and enhanced by 14-3-3 proteins. MAPK1/ERK2 activation can induce a negative feedback that promotes the dissociation of the heterodimer. Forms a multiprotein complex with Ras (M-Ras/MRAS), SHOC2 and protein phosphatase 1 (PPP1CA, PPP1CB and PPP1CC). Interacts with LZTR1. Interacts with Ras proteins; the interaction is antagonized by RIN1. Weakly interacts with RIT1. Interacts (via N-terminus) with RGS14 (via RBD domains); the interaction mediates the formation of a ternary complex with BRAF, a ternary complex inhibited by GNAI1. Probably forms a complex composed of chaperones HSP90 and HSP70, co-chaperones CDC37, PPP5C, TSC1 and client protein TSC2, CDK4, AKT, RAF1 and NR3C1; this complex does not contain co-chaperones STIP1/HOP and PTGES3/p23. Interacts with STK3/MST2; the interaction inhibits its pro-apoptotic activity. Interacts (when phosphorylated at Ser-259) with YWHAZ (unphosphorylated at 'Thr-232'). Interacts with MAP2K1/MEK1 and MAP2K2/MEK2. Interacts with MAP3K5/ASF1 (via N-terminus) and this interaction inhibits the proapoptotic function of MAP3K5/ASK1. Interacts with PAK1 (via kinase domain). The Ser-338 and Ser-339 phosphorylated form (by PAK1) interacts with BCL2. Interacts with PEBP1/RKIP and this interaction is enhanced if RAF1 is phosphorylated on residues Ser-338, Ser-339, Tyr-340 and Tyr-341. Interacts with ADCY2, ADCY5, ADCY6, DGKH, RCAN1/DSCR1, PPP1R12A, PKB/AKT1, SPRY2, SPRY4, CNKSR1/CNK1, KSR2 and PHB/prohibitin. The phosphorylated form interacts with PIN1. Interacts with PPP2CA, PPP2R1B and ROCK2. In its active form, interacts with PRMT5. Interacts with FAM83B; displaces 14-3-3 proteins from RAF1 and activates RAF1. Interacts with PDE8A; the interaction promotes RAF1 activity. Interacts with MFHAS1. Interacts with GLS. Interacts with NEK10 and MAP2K1; the interaction is direct with NEK10 and required for ERK1/2-signaling pathway activation in response to UV irradiation. Requires Zn(2+) as cofactor. Phosphorylation at Thr-269, Ser-338, Tyr-341, Thr-491 and Ser-494 results in its activation. Phosphorylation at Ser-29, Ser-43, Ser-289, Ser-296, Ser-301 and Ser-642 by MAPK1/ERK2 results in its inactivation. Phosphorylation at Ser-259 induces the interaction with YWHAZ and inactivates kinase activity. Dephosphorylation of Ser-259 by the SHOC2-MRAS-PP1c (SMP) complex consisting of SHOC2, GTP-bound M-Ras/MRAS and the catalytic subunit of protein phosphatase 1 (PPP1CA, PPP1CB or PPP1CC); this relieves inactivation and stimulates kinase activity. Phosphorylation at Ser-338 by PAK1 and PAK5 and Ser-339 by PAK1 is required for its mitochondrial localization. Phosphorylation at Ser-621 in response to growth factor treatment stabilizes the protein, possibly by preventing proteasomal degradation. Phosphorylation at Ser-289, Ser-296, Ser-301, Ser-338 and Ser-621 are somehow linked to the methylation potential of cells. Treatment of cells with HGF in the presence of the methylation inhibitor 5'-methylthioadenosine (MTA) results in increased phosphorylation at Ser-338 and Ser-621 and decreased phosphorylation at Ser-296, Ser-301 and Ser-338. Dephosphorylation at Ser-338 by PPP5C results in a decreased of activity. Post-translationally, methylated at Arg-563 in response to EGF treatment. This modification leads to destabilization of the protein, possibly through proteasomal degradation. In terms of tissue distribution, present in all tissues tested: testis, ovary, small intestine, colon, peripheral blood leukocytes, fetal liver, bone marrow, thymus, lymph node and spleen, and the cell lines melanoma G-361, lung carcinoma A-549, colorectal adenocarcinoma SW480, Burkitt's lymphoma Raji and lymphoblastic leukemia MOLT-4. In skeletal muscle, isoform 1 is more abundant than isoform 2.

The protein resides in the cytoplasm. It localises to the cell membrane. The protein localises to the mitochondrion. It is found in the nucleus. It catalyses the reaction L-seryl-[protein] + ATP = O-phospho-L-seryl-[protein] + ADP + H(+). The enzyme catalyses L-threonyl-[protein] + ATP = O-phospho-L-threonyl-[protein] + ADP + H(+). Its activity is regulated as follows. Regulation is a highly complex process involving membrane recruitment, protein-protein interactions, dimerization, and phosphorylation/dephosphorylation events. Ras-GTP recruits RAF1 to the membrane, thereby promoting its activation. The inactive conformation of RAF1 is maintained by autoinhibitory interactions occurring between the N-terminal regulatory and the C-terminal catalytic domains and by the binding of a 14-3-3 protein that contacts two phosphorylation sites, Ser-259 and Ser-621. Upon mitogenic stimulation, Ras and PPP2R1A cooperate to release autoinhibition and the subsequent phosphorylation of activating sites: Ser-338, Tyr-341, Thr-491, and Ser-494, yields a fully active kinase. Through a negative feedback mechanism involving MAPK1/ERK2, RAF1 is phosphorylated on Ser-29, Ser-43, Ser-289, Ser-296, Ser-301 and Ser-642 by MAPK1/ERK2, which yields an inactive, desensitized kinase. The signaling-competent conformation of RAF1 is finally re-established by the coordinated action of PIN1, a prolyl isomerase that converts pSer and pThr residues from the cis to the trans conformation, which is preferentially recognized and dephosphorylated by PPP2R1A. Activated by homodimerization and heterodimerization (with BRAF). Also regulated through association with other proteins such as KSR2, CNKSR1/CNK1, PEBP1/RKIP, PHB/prohibitin and SPRY4. PEBP1/RKIP acts by dissociating RAF1 from its substrates MAP2K1/MEK1 and MAP2K2/MEK2. PHB/prohibitin facilitates the displacement of 14-3-3 from RAF1 by activated Ras, thereby promoting cell membrane localization and phosphorylation of RAF1 at the activating Ser-338. SPRY4 inhibits Ras-independent, but not Ras-dependent, activation of RAF1. CNKSR1/CNK1 regulates Src-mediated RAF1 activation. Its function is as follows. Serine/threonine-protein kinase that acts as a regulatory link between the membrane-associated Ras GTPases and the MAPK/ERK cascade, and this critical regulatory link functions as a switch determining cell fate decisions including proliferation, differentiation, apoptosis, survival and oncogenic transformation. RAF1 activation initiates a mitogen-activated protein kinase (MAPK) cascade that comprises a sequential phosphorylation of the dual-specific MAPK kinases (MAP2K1/MEK1 and MAP2K2/MEK2) and the extracellular signal-regulated kinases (MAPK3/ERK1 and MAPK1/ERK2). The phosphorylated form of RAF1 (on residues Ser-338 and Ser-339, by PAK1) phosphorylates BAD/Bcl2-antagonist of cell death at 'Ser-75'. Phosphorylates adenylyl cyclases: ADCY2, ADCY5 and ADCY6, resulting in their activation. Phosphorylates PPP1R12A resulting in inhibition of the phosphatase activity. Phosphorylates TNNT2/cardiac muscle troponin T. Can promote NF-kB activation and inhibit signal transducers involved in motility (ROCK2), apoptosis (MAP3K5/ASK1 and STK3/MST2), proliferation and angiogenesis (RB1). Can protect cells from apoptosis also by translocating to the mitochondria where it binds BCL2 and displaces BAD/Bcl2-antagonist of cell death. Plays a role in the oncogenic transformation of epithelial cells via repression of the TJ protein, occludin (OCLN) by inducing the up-regulation of a transcriptional repressor SNAI2/SLUG, which induces down-regulation of OCLN. Restricts caspase activation in response to selected stimuli, notably Fas stimulation, pathogen-mediated macrophage apoptosis, and erythroid differentiation. Regulates Rho signaling and migration, and is required for normal wound healing. The polypeptide is RAF proto-oncogene serine/threonine-protein kinase (Raf1) (Mus musculus (Mouse)).